The sequence spans 205 residues: Large ribosomal subunit protein uL4 (205 aa).

Positions 43 to 96 (GKRQGTSKVKNRSAVRGGGKKPWRQKGTGRARQGSIRSPQWRGGGTVFGPTPRS) are disordered. The span at 51–71 (VKNRSAVRGGGKKPWRQKGTG) shows a compositional bias: basic residues.

It belongs to the universal ribosomal protein uL4 family. As to quaternary structure, part of the 50S ribosomal subunit.

One of the primary rRNA binding proteins, this protein initially binds near the 5'-end of the 23S rRNA. It is important during the early stages of 50S assembly. It makes multiple contacts with different domains of the 23S rRNA in the assembled 50S subunit and ribosome. Functionally, forms part of the polypeptide exit tunnel. The protein is Large ribosomal subunit protein uL4 of Lactobacillus helveticus (strain DPC 4571).